The primary structure comprises 375 residues: Neutral protease 2 homolog MGYG_00813 (375 aa).

Residues 1–19 (MQVIVALAALSSLAAPALG) form the signal peptide. Residues 20–190 (FSIPRGVPVS…SGPLTRIGKR (171 aa)) constitute a propeptide that is removed on maturation. 2 disulfides stabilise this stretch: Cys198-Cys268 and Cys275-Cys293. Position 318 (His318) interacts with Zn(2+). Residue Glu319 is part of the active site. Positions 322 and 333 each coordinate Zn(2+).

The protein belongs to the peptidase M35 family. Zn(2+) serves as cofactor.

Its subcellular location is the secreted. The enzyme catalyses Preferential cleavage of bonds with hydrophobic residues in P1'. Also 3-Asn-|-Gln-4 and 8-Gly-|-Ser-9 bonds in insulin B chain.. Secreted metalloproteinase that allows assimilation of proteinaceous substrates. Shows high activities on basic nuclear substrates such as histone and protamine. May be involved in virulence. This is Neutral protease 2 homolog MGYG_00813 from Arthroderma gypseum (strain ATCC MYA-4604 / CBS 118893) (Microsporum gypseum).